Here is a 349-residue protein sequence, read N- to C-terminus: GMP reductase (349 aa).

108-131 (IDFLKIKKIFLLSSELKYICIDVA) provides a ligand contact to NADP(+). K(+) contacts are provided by G181 and G183. C186 acts as the Thioimidate intermediate in catalysis. An NADP(+)-binding site is contributed by 216–239 (IISDGGCTVSGDIAKAFGGGADFV).

It belongs to the IMPDH/GMPR family. GuaC type 1 subfamily. As to quaternary structure, homotetramer.

The enzyme catalyses IMP + NH4(+) + NADP(+) = GMP + NADPH + 2 H(+). In terms of biological role, catalyzes the irreversible NADPH-dependent deamination of GMP to IMP. It functions in the conversion of nucleobase, nucleoside and nucleotide derivatives of G to A nucleotides, and in maintaining the intracellular balance of A and G nucleotides. The protein is GMP reductase of Buchnera aphidicola subsp. Acyrthosiphon pisum (strain Tuc7).